Reading from the N-terminus, the 106-residue chain is MSRVYKIKNLEEARNFLYSIEEPLILTNDDSSIKYYGMLVIDYMFKTLRREFPEKVLALTVNVGQDHAALFTAIKLGYKNIVYIGASAEAKRLLSDLYNNPITYKV.

This is an uncharacterized protein from Rickettsia prowazekii (strain Madrid E).